Here is a 279-residue protein sequence, read N- to C-terminus: Ribonuclease Z (279 aa).

Histidine 61, histidine 63, aspartate 65, histidine 66, histidine 153, aspartate 176, and histidine 240 together coordinate Zn(2+). Catalysis depends on aspartate 65, which acts as the Proton acceptor.

Belongs to the RNase Z family. Homodimer. The cofactor is Zn(2+).

The catalysed reaction is Endonucleolytic cleavage of RNA, removing extra 3' nucleotides from tRNA precursor, generating 3' termini of tRNAs. A 3'-hydroxy group is left at the tRNA terminus and a 5'-phosphoryl group is left at the trailer molecule.. Functionally, zinc phosphodiesterase, which displays some tRNA 3'-processing endonuclease activity. Probably involved in tRNA maturation, by removing a 3'-trailer from precursor tRNA. This chain is Ribonuclease Z, found in Mycobacterium marinum (strain ATCC BAA-535 / M).